A 260-amino-acid chain; its full sequence is Thiazole synthase (260 aa).

Lys96 functions as the Schiff-base intermediate with DXP in the catalytic mechanism. 1-deoxy-D-xylulose 5-phosphate contacts are provided by residues Gly157, 184-185 (AG), and 206-207 (NT).

The protein belongs to the ThiG family. In terms of assembly, homotetramer. Forms heterodimers with either ThiH or ThiS.

The protein localises to the cytoplasm. It catalyses the reaction [ThiS sulfur-carrier protein]-C-terminal-Gly-aminoethanethioate + 2-iminoacetate + 1-deoxy-D-xylulose 5-phosphate = [ThiS sulfur-carrier protein]-C-terminal Gly-Gly + 2-[(2R,5Z)-2-carboxy-4-methylthiazol-5(2H)-ylidene]ethyl phosphate + 2 H2O + H(+). The protein operates within cofactor biosynthesis; thiamine diphosphate biosynthesis. Its function is as follows. Catalyzes the rearrangement of 1-deoxy-D-xylulose 5-phosphate (DXP) to produce the thiazole phosphate moiety of thiamine. Sulfur is provided by the thiocarboxylate moiety of the carrier protein ThiS. In vitro, sulfur can be provided by H(2)S. The polypeptide is Thiazole synthase (Bradyrhizobium sp. (strain BTAi1 / ATCC BAA-1182)).